The primary structure comprises 220 residues: Claudin-3 (220 aa).

Residues 1–8 (MSMGLEIT) are Cytoplasmic-facing. The chain crosses the membrane as a helical span at residues 9–29 (GTALAVLGWLGTIVCCALPMW). Residues 30-80 (RVSAFIGSNIITSQNIWEGLWMNCVVQSTGQMQCKVYDSLLALPQDLQAAR) lie on the Extracellular side of the membrane. The helical transmembrane segment at 81–101 (ALIVVAILLAAFGLLVALVGA) threads the bilayer. At 102 to 115 (QCTNCVQDDTAKAK) the chain is on the cytoplasmic side. A helical transmembrane segment spans residues 116–136 (ITIVAGVLFLLAALLTLVPVS). Topologically, residues 137-159 (WSANTIIRDFYNPVVPEAQKREM) are extracellular. The helical transmembrane segment at 160-180 (GAGLYVGWAAAALQLLGGALL) threads the bilayer. Over 181 to 220 (CCSCPPREKKYTATKVVYSAPRSTGPGASLGTGYDRKDYV) the chain is Cytoplasmic. Y198 carries the post-translational modification Phosphotyrosine. Residues S199 and S209 each carry the phosphoserine modification. The interval 219-220 (YV) is interactions with TJP1, TJP2 and TJP3.

Belongs to the claudin family. In terms of assembly, can form homo- and heteropolymers with other CLDN. Homopolymers interact with CLDN1 and CLDN2 homopolymers. Interacts in cis (within the same plasma membrane) with CLDN19. Directly interacts with TJP1/ZO-1, TJP2/ZO-2 and TJP3/ZO-3.

The protein localises to the cell junction. It localises to the tight junction. The protein resides in the cell membrane. Its function is as follows. Barrier-forming claudin. Plays a major role in tight junction-specific obliteration of the intercellular space, through calcium-independent cell-adhesion activity. This Homo sapiens (Human) protein is Claudin-3 (CLDN3).